The primary structure comprises 69 residues: MFTLKKTLLLLFFLGTISISLCKQERDADEDDGRKMTEEEVKRSIITTTKEAKLPQLWKQIACRLYNTC.

An N-terminal signal peptide occupies residues 1–22; the sequence is MFTLKKTLLLLFFLGTISISLC. Residues 23–43 constitute a propeptide that is removed on maturation; the sequence is KQERDADEDDGRKMTEEEVKR. Residues C63 and C69 are joined by a disulfide bond.

The protein belongs to the frog skin active peptide (FSAP) family. Pleurain subfamily. As to expression, expressed by the skin glands.

It localises to the secreted. In terms of biological role, antimicrobial peptide. Has activity against Gram-positive and -negative bacteria, and fungi. Has little hemolytic activity on red blood cells. The polypeptide is Pleurain-A4 (Nidirana pleuraden (Yunnan pond frog)).